The following is a 117-amino-acid chain: Photosystem II reaction center Psb28 protein (117 aa).

Belongs to the Psb28 family. Part of the photosystem II complex.

Its subcellular location is the cellular thylakoid membrane. The polypeptide is Photosystem II reaction center Psb28 protein (Prochlorococcus marinus subsp. pastoris (strain CCMP1986 / NIES-2087 / MED4)).